Consider the following 327-residue polypeptide: Flap endonuclease 1 (327 aa).

The N-domain stretch occupies residues 1–98; the sequence is MGVKLKDIIQ…ETIDQRRQTR (98 aa). The Mg(2+) site is built by D27, D80, E152, E154, D173, D175, and D226. The interval 116 to 246 is I-domain; that stretch reads EARKYAMRSS…KTALKLAKKG (131 aa). Positions 319–327 are interaction with PCNA; that stretch reads SQKSLEDWF.

Belongs to the XPG/RAD2 endonuclease family. FEN1 subfamily. Interacts with PCNA. PCNA stimulates the nuclease activity without altering cleavage specificity. Mg(2+) serves as cofactor.

Structure-specific nuclease with 5'-flap endonuclease and 5'-3' exonuclease activities involved in DNA replication and repair. During DNA replication, cleaves the 5'-overhanging flap structure that is generated by displacement synthesis when DNA polymerase encounters the 5'-end of a downstream Okazaki fragment. Binds the unpaired 3'-DNA end and kinks the DNA to facilitate 5' cleavage specificity. Cleaves one nucleotide into the double-stranded DNA from the junction in flap DNA, leaving a nick for ligation. Also involved in the base excision repair (BER) pathway. Acts as a genome stabilization factor that prevents flaps from equilibrating into structures that lead to duplications and deletions. Also possesses 5'-3' exonuclease activity on nicked or gapped double-stranded DNA. The sequence is that of Flap endonuclease 1 from Methanobrevibacter smithii (strain ATCC 35061 / DSM 861 / OCM 144 / PS).